Here is a 1404-residue protein sequence, read N- to C-terminus: DNA-directed RNA polymerase subunit beta' (1404 aa).

The Zn(2+) site is built by Cys70, Cys72, Cys85, and Cys88. The Mg(2+) site is built by Asp460, Asp462, and Asp464. Residues Cys814, Cys888, Cys895, and Cys898 each coordinate Zn(2+).

Belongs to the RNA polymerase beta' chain family. In terms of assembly, the RNAP catalytic core consists of 2 alpha, 1 beta, 1 beta' and 1 omega subunit. When a sigma factor is associated with the core the holoenzyme is formed, which can initiate transcription. It depends on Mg(2+) as a cofactor. Zn(2+) serves as cofactor.

The catalysed reaction is RNA(n) + a ribonucleoside 5'-triphosphate = RNA(n+1) + diphosphate. Functionally, DNA-dependent RNA polymerase catalyzes the transcription of DNA into RNA using the four ribonucleoside triphosphates as substrates. The polypeptide is DNA-directed RNA polymerase subunit beta' (Shewanella pealeana (strain ATCC 700345 / ANG-SQ1)).